A 31-amino-acid polypeptide reads, in one-letter code: Cytochrome b6-f complex subunit 6 (31 aa).

Residues I4–G24 form a helical membrane-spanning segment.

The protein belongs to the PetL family. In terms of assembly, the 4 large subunits of the cytochrome b6-f complex are cytochrome b6, subunit IV (17 kDa polypeptide, PetD), cytochrome f and the Rieske protein, while the 4 small subunits are PetG, PetL, PetM and PetN. The complex functions as a dimer.

The protein resides in the plastid. It is found in the chloroplast thylakoid membrane. Functionally, component of the cytochrome b6-f complex, which mediates electron transfer between photosystem II (PSII) and photosystem I (PSI), cyclic electron flow around PSI, and state transitions. PetL is important for photoautotrophic growth as well as for electron transfer efficiency and stability of the cytochrome b6-f complex. In Coffea arabica (Arabian coffee), this protein is Cytochrome b6-f complex subunit 6.